We begin with the raw amino-acid sequence, 141 residues long: Large ribosomal subunit protein uL11 (141 aa).

Belongs to the universal ribosomal protein uL11 family. Part of the ribosomal stalk of the 50S ribosomal subunit. Interacts with L10 and the large rRNA to form the base of the stalk. L10 forms an elongated spine to which L12 dimers bind in a sequential fashion forming a multimeric L10(L12)X complex. One or more lysine residues are methylated.

Forms part of the ribosomal stalk which helps the ribosome interact with GTP-bound translation factors. This chain is Large ribosomal subunit protein uL11, found in Streptococcus equi subsp. equi (strain 4047).